Consider the following 199-residue polypeptide: MQFEVKDLINKIKKDGLEEAERVSNDIILKAKREAEEIVARAEESARALKAKSEKEINDYKSHALEASRQAIRDLIIGVEKNLKSLFENTLKDNVVEVFSDNNFLAELIIKITDSWAKEEKLVVQLNESDFSSLEQILRLKLGNKLAQGIEIKPFKGISKGFKIQKKNIGLQYDFSAETVADILFDYLNPRFKEIIKVV.

The protein belongs to the V-ATPase E subunit family.

Produces ATP from ADP in the presence of a proton gradient across the membrane. This is V-type ATP synthase subunit E from Borreliella afzelii (strain PKo) (Borrelia afzelii).